The chain runs to 334 residues: Glyceraldehyde-3-phosphate dehydrogenase (334 aa).

NAD(+)-binding positions include 12-13 (RI), Asp35, Arg79, and Ser121. Residues 152–154 (SCT), Thr183, Arg198, 211–212 (TG), and Arg234 each bind D-glyceraldehyde 3-phosphate. Cys153 (nucleophile) is an active-site residue. Asn315 is a binding site for NAD(+).

The protein belongs to the glyceraldehyde-3-phosphate dehydrogenase family. Homotetramer.

Its subcellular location is the cytoplasm. The catalysed reaction is D-glyceraldehyde 3-phosphate + phosphate + NAD(+) = (2R)-3-phospho-glyceroyl phosphate + NADH + H(+). It functions in the pathway carbohydrate degradation; glycolysis; pyruvate from D-glyceraldehyde 3-phosphate: step 1/5. In terms of biological role, catalyzes the oxidative phosphorylation of glyceraldehyde 3-phosphate (G3P) to 1,3-bisphosphoglycerate (BPG) using the cofactor NAD. The first reaction step involves the formation of a hemiacetal intermediate between G3P and a cysteine residue, and this hemiacetal intermediate is then oxidized to a thioester, with concomitant reduction of NAD to NADH. The reduced NADH is then exchanged with the second NAD, and the thioester is attacked by a nucleophilic inorganic phosphate to produce BPG. In Corynebacterium glutamicum (strain ATCC 13032 / DSM 20300 / JCM 1318 / BCRC 11384 / CCUG 27702 / LMG 3730 / NBRC 12168 / NCIMB 10025 / NRRL B-2784 / 534), this protein is Glyceraldehyde-3-phosphate dehydrogenase (gap).